Reading from the N-terminus, the 224-residue chain is MHPQELAKFIDHTALTAEKTAQDIIKLCDEAIENQFWSVCINPCYIPLAKEKLAATNVKICTVIGFPLGANLTSVKAFEAQESIKAGAQEIDMVINVGWIKSGEWDKVRSDIQAVLQACNGTLLKVILETCLLTPDEIVKACEICRDLKVGFVKTSTGFNKDGATVEDVALMRQTVGDKLGVKASGGIRDTETAMAMINAGATRIGASAGIAIIKGLQDNSGGY.

The active-site Proton donor/acceptor is Asp92. Lys154 serves as the catalytic Schiff-base intermediate with acetaldehyde. Lys183 acts as the Proton donor/acceptor in catalysis.

The protein belongs to the DeoC/FbaB aldolase family. DeoC type 1 subfamily.

It is found in the cytoplasm. The enzyme catalyses 2-deoxy-D-ribose 5-phosphate = D-glyceraldehyde 3-phosphate + acetaldehyde. Its pathway is carbohydrate degradation; 2-deoxy-D-ribose 1-phosphate degradation; D-glyceraldehyde 3-phosphate and acetaldehyde from 2-deoxy-alpha-D-ribose 1-phosphate: step 2/2. Its function is as follows. Catalyzes a reversible aldol reaction between acetaldehyde and D-glyceraldehyde 3-phosphate to generate 2-deoxy-D-ribose 5-phosphate. This Mannheimia succiniciproducens (strain KCTC 0769BP / MBEL55E) protein is Deoxyribose-phosphate aldolase.